Consider the following 1363-residue polypeptide: Clustered mitochondria protein homolog (1363 aa).

2 TPR repeats span residues 29-63 (LPSF…IVLC) and 120-154 (KEKS…DIGS). The disordered stretch occupies residues 172-191 (KEAKKEESTEKEQQEKEELS). One copy of the TPR 3 repeat lies at 283-316 (STINFNPTIKINEKGKFNKSYLLYDLVCQLSPLF). The Clu domain maps to 361–631 (DLSRSQLSSL…RTTPRDIEFI (271 aa)). The interval 521–544 (PVITSPTTDAEGKNEAEEPESEPV) is disordered. The TPR 4 repeat unit spans residues 548–581 (VYGLSSDGSRILEDKSFEEPLKQIGDFFHLKPHK). A compositionally biased stretch (basic and acidic residues) spans 799-832 (AKAEKKREEEKEKEEKEATESEDKKEKKEDKEDA). The segment at 799–844 (AKAEKKREEEKEKEEKEATESEDKKEKKEDKEDAEKEEAEAEEEVP) is disordered. Acidic residues predominate over residues 833–842 (EKEEAEAEEE). 4 TPR repeats span residues 1057-1090 (VEEI…NESI), 1141-1174 (ITAY…WSLV), 1183-1216 (INTL…TKKL), and 1225-1258 (GFIY…FMKL). Residues 1291–1363 (QQETQKKSKT…SGSKKSNKKK (73 aa)) form a disordered region. The segment covering 1330-1342 (PPQSNPEIANQSI) has biased composition (polar residues).

The protein belongs to the CLU family. May associate with the eukaryotic translation initiation factor 3 (eIF-3) complex.

The protein localises to the cytoplasm. Its function is as follows. mRNA-binding protein involved in proper cytoplasmic distribution of mitochondria. This chain is Clustered mitochondria protein homolog, found in Candida albicans (strain SC5314 / ATCC MYA-2876) (Yeast).